The primary structure comprises 353 residues: Phospho-N-acetylmuramoyl-pentapeptide-transferase (353 aa).

10 helical membrane-spanning segments follow: residues 22–42 (FAFFIALCLSLFLMPKFITWA), 65–85 (TPTMGGLIFISSAVIASLFCI), 88–108 (DNIFAISALLCLILFCLIGLI), 129–149 (LLAQIIAGLICILPLYFSSEL), 161–181 (PLFDMEIFAIVFWILVLISSS), 192–212 (GLATVPSIFSLSTLGIFLYLS), 228–248 (GLGEVVIICAALIGALMGFLW), 256–276 (VFMGDSGSLALGGFIGFLAII), 281–301 (ILLLLIGFVFVLETVSVILQV), and 330–350 (KIIVRFWMIALLSNLLALASI).

The protein belongs to the glycosyltransferase 4 family. MraY subfamily. Mg(2+) serves as cofactor.

It is found in the cell inner membrane. The enzyme catalyses UDP-N-acetyl-alpha-D-muramoyl-L-alanyl-gamma-D-glutamyl-meso-2,6-diaminopimeloyl-D-alanyl-D-alanine + di-trans,octa-cis-undecaprenyl phosphate = di-trans,octa-cis-undecaprenyl diphospho-N-acetyl-alpha-D-muramoyl-L-alanyl-D-glutamyl-meso-2,6-diaminopimeloyl-D-alanyl-D-alanine + UMP. It functions in the pathway cell wall biogenesis; peptidoglycan biosynthesis. Functionally, catalyzes the initial step of the lipid cycle reactions in the biosynthesis of the cell wall peptidoglycan: transfers peptidoglycan precursor phospho-MurNAc-pentapeptide from UDP-MurNAc-pentapeptide onto the lipid carrier undecaprenyl phosphate, yielding undecaprenyl-pyrophosphoryl-MurNAc-pentapeptide, known as lipid I. The polypeptide is Phospho-N-acetylmuramoyl-pentapeptide-transferase (Campylobacter jejuni subsp. jejuni serotype O:6 (strain 81116 / NCTC 11828)).